Reading from the N-terminus, the 123-residue chain is Alpha-ketoglutarate dehydrogenase subunit 4, mitochondrial (123 aa).

The transit peptide at 1 to 8 (MIATPIRL) directs the protein to the mitochondrion.

It belongs to the alpha-ketoglutarate dehydrogenase component 4 family. As to quaternary structure, component of the 2-oxoglutarate dehydrogenase complex (OGDC), also called alpha-ketoglutarate dehydrogenase (KGDH) complex. The copmplex is composed of the catalytic subunits OGDH (2-oxoglutarate dehydrogenase KGD1; also called E1 subunit), DLST (dihydrolipoamide succinyltransferase KGD2; also called E2 subunit) and DLD (dihydrolipoamide dehydrogenase LPD1; also called E3 subunit), and the assembly factor KGD4. Within OGDC, interacts (via N-terminus) with E3 subunit and (via C-terminus) with the complex core formed by E1 and E2 subunits.

The protein resides in the mitochondrion. In terms of biological role, molecular adapter that is necessary to a form a stable 2-oxoglutarate dehydrogenase enzyme complex (OGDC). Required for incorporation of the E3 subunit (LPD1) into the E1-E2 core (KGD1-KGD2) of mitochondrial OGDC, and acting as a stability factor for the fully assembled complex. The protein is Alpha-ketoglutarate dehydrogenase subunit 4, mitochondrial of Saccharomyces cerevisiae (strain ATCC 204508 / S288c) (Baker's yeast).